The chain runs to 49 residues: Large ribosomal subunit protein bL33A (49 aa).

Residues 21–49 (KNKRNNPERVEMKKYCSRDNKHTLHRETK) form a disordered region. Basic and acidic residues predominate over residues 25–49 (NNPERVEMKKYCSRDNKHTLHRETK).

The protein belongs to the bacterial ribosomal protein bL33 family.

This is Large ribosomal subunit protein bL33A from Staphylococcus epidermidis (strain ATCC 35984 / DSM 28319 / BCRC 17069 / CCUG 31568 / BM 3577 / RP62A).